Consider the following 211-residue polypeptide: ATP phosphoribosyltransferase (211 aa).

The protein belongs to the ATP phosphoribosyltransferase family. Short subfamily. As to quaternary structure, heteromultimer composed of HisG and HisZ subunits.

Its subcellular location is the cytoplasm. The catalysed reaction is 1-(5-phospho-beta-D-ribosyl)-ATP + diphosphate = 5-phospho-alpha-D-ribose 1-diphosphate + ATP. Its pathway is amino-acid biosynthesis; L-histidine biosynthesis; L-histidine from 5-phospho-alpha-D-ribose 1-diphosphate: step 1/9. Catalyzes the condensation of ATP and 5-phosphoribose 1-diphosphate to form N'-(5'-phosphoribosyl)-ATP (PR-ATP). Has a crucial role in the pathway because the rate of histidine biosynthesis seems to be controlled primarily by regulation of HisG enzymatic activity. The sequence is that of ATP phosphoribosyltransferase from Pseudomonas savastanoi pv. phaseolicola (strain 1448A / Race 6) (Pseudomonas syringae pv. phaseolicola (strain 1448A / Race 6)).